The sequence spans 109 residues: Spermidine export protein MdtI (109 aa).

The next 4 helical transmembrane spans lie at 6–26 (WIHAAWLAIAIVLEIIANVFL), 36–56 (IYGILSLAAVLGAFSALSQAV), 64–84 (AYALWGGFGIAATIAAGWVLF), and 88–108 (LNNKGWAGVILLVAGMVLIKL).

Belongs to the drug/metabolite transporter (DMT) superfamily. Small multidrug resistance (SMR) (TC 2.A.7.1) family. MdtI subfamily. Forms a complex with MdtJ.

It localises to the cell inner membrane. Functionally, catalyzes the excretion of spermidine. The sequence is that of Spermidine export protein MdtI from Klebsiella pneumoniae subsp. pneumoniae (strain ATCC 700721 / MGH 78578).